Here is a 145-residue protein sequence, read N- to C-terminus: uncharacterized protein (145 aa).

Residues 95 to 119 (YVDSTSRTPSAKKDMQGLSVSEKQT) form a disordered region.

This is an uncharacterized protein from Treponema pallidum (strain Nichols).